A 319-amino-acid chain; its full sequence is Transmembrane and ubiquitin-like domain-containing protein 2 (319 aa).

A helical membrane pass occupies residues 36 to 56; sequence VMVVAGVVVLTLALVLAWLST. Disordered stretches follow at residues 88–130 and 146–165; these read VNQG…GDME and QAGLESSRPEASLGLDDSTC. Residues 95–111 are compositionally biased toward basic and acidic residues; the sequence is PTEHPHPSGGSDDKAEE. The Ubiquitin-like domain occupies 173–246; the sequence is INVRLKFLND…IHCHRSPPGA (74 aa). A run of 2 helical transmembrane segments spans residues 264–284 and 293–313; these read LGVNVGSLMVPVFVVLLGVVW and FFTAPATVSLVGVTVFFSFLV.

The protein localises to the membrane. In Rattus norvegicus (Rat), this protein is Transmembrane and ubiquitin-like domain-containing protein 2 (Tmub2).